The primary structure comprises 145 residues: Shadow of prion protein (145 aa).

The first 24 residues, 1 to 24 (MNWAAAVCWALLLAATFLCDGSAA), serve as a signal peptide directing secretion. Asn105 carries N-linked (GlcNAc...) asparagine glycosylation. The GPI-anchor amidated serine moiety is linked to residue Ser119. The propeptide at 120 to 145 (GAGPTGHRHLCPLLGGALGALRLLRP) is removed in mature form.

It belongs to the SPRN family. In terms of processing, N-glycosylated. Mainly expressed in brain.

The protein localises to the cell membrane. Its function is as follows. Prion-like protein that has PrP(C)-like neuroprotective activity. May act as a modulator for the biological actions of normal and abnormal PrP. This Ovis aries (Sheep) protein is Shadow of prion protein (SPRN).